Here is a 134-residue protein sequence, read N- to C-terminus: Protein NrdI (134 aa).

The protein belongs to the NrdI family.

Probably involved in ribonucleotide reductase function. This chain is Protein NrdI, found in Rhizobium etli (strain CIAT 652).